The chain runs to 160 residues: CXXC motif containing zinc binding protein (160 aa).

Zn(2+)-binding residues include cysteine 33, cysteine 36, cysteine 67, and cysteine 70. Position 75 is a phosphoserine (serine 75).

This sequence belongs to the UPF0587 family. Monomer.

This chain is CXXC motif containing zinc binding protein (CZIB), found in Bos taurus (Bovine).